The primary structure comprises 1299 residues: DNA-directed RNA polymerase subunit beta' (1299 aa).

Zn(2+) contacts are provided by Cys-60, Cys-62, Cys-75, and Cys-78. The disordered stretch occupies residues 188–209 (GAKSDQKRRAKDGAEKEMGQTR). Mg(2+) contacts are provided by Asp-535, Asp-537, and Asp-539. Zn(2+) contacts are provided by Cys-882, Cys-959, Cys-966, and Cys-969.

Belongs to the RNA polymerase beta' chain family. As to quaternary structure, the RNAP catalytic core consists of 2 alpha, 1 beta, 1 beta' and 1 omega subunit. When a sigma factor is associated with the core the holoenzyme is formed, which can initiate transcription. Mg(2+) is required as a cofactor. Requires Zn(2+) as cofactor.

The catalysed reaction is RNA(n) + a ribonucleoside 5'-triphosphate = RNA(n+1) + diphosphate. Its function is as follows. DNA-dependent RNA polymerase catalyzes the transcription of DNA into RNA using the four ribonucleoside triphosphates as substrates. This is DNA-directed RNA polymerase subunit beta' from Clavibacter michiganensis subsp. michiganensis (strain NCPPB 382).